Reading from the N-terminus, the 208-residue chain is Adenylate kinase (208 aa).

10–15 serves as a coordination point for ATP; sequence GAGKGT. Residues 30 to 59 form an NMP region; that stretch reads STGEMLRAAVAAGTPVGLKAKDVMASGGLV. AMP-binding positions include T31, R36, 57–59, 85–88, and Q92; these read GLV and GFPR. The LID stretch occupies residues 126-142; that stretch reads SRVAEMTARGEQVRADD. Residue R127 participates in ATP binding. R139 and R150 together coordinate AMP. M178 contacts ATP.

It belongs to the adenylate kinase family. As to quaternary structure, monomer.

The protein localises to the cytoplasm. It carries out the reaction AMP + ATP = 2 ADP. The protein operates within purine metabolism; AMP biosynthesis via salvage pathway; AMP from ADP: step 1/1. Its function is as follows. Catalyzes the reversible transfer of the terminal phosphate group between ATP and AMP. Plays an important role in cellular energy homeostasis and in adenine nucleotide metabolism. The protein is Adenylate kinase of Nitrobacter hamburgensis (strain DSM 10229 / NCIMB 13809 / X14).